Consider the following 341-residue polypeptide: Tetraacyldisaccharide 4'-kinase (341 aa).

Residue 64–71 (AVGGSGKT) coordinates ATP.

The protein belongs to the LpxK family.

It carries out the reaction a lipid A disaccharide + ATP = a lipid IVA + ADP + H(+). The protein operates within glycolipid biosynthesis; lipid IV(A) biosynthesis; lipid IV(A) from (3R)-3-hydroxytetradecanoyl-[acyl-carrier-protein] and UDP-N-acetyl-alpha-D-glucosamine: step 6/6. Transfers the gamma-phosphate of ATP to the 4'-position of a tetraacyldisaccharide 1-phosphate intermediate (termed DS-1-P) to form tetraacyldisaccharide 1,4'-bis-phosphate (lipid IVA). This Azoarcus sp. (strain BH72) protein is Tetraacyldisaccharide 4'-kinase.